A 534-amino-acid chain; its full sequence is Phenylalanine N-monooxygenase CYP79D16 (534 aa).

A signal peptide spans 1–21 (MEANVGFLTLCLAITLVRFLM). C472 provides a ligand contact to heme. Residue N500 is glycosylated (N-linked (GlcNAc...) asparagine).

The protein belongs to the cytochrome P450 family. Heme is required as a cofactor. In terms of tissue distribution, expressed in seedlings.

The enzyme catalyses L-phenylalanine + 2 reduced [NADPH--hemoprotein reductase] + 2 O2 = (E)-phenylacetaldehyde oxime + 2 oxidized [NADPH--hemoprotein reductase] + CO2 + 3 H2O + 2 H(+). Functionally, involved in L-phenylalanine-derived cyanogenic glycoside biosynthesis, including prunasin and amygdalin defensive agents. Catalyzes the conversion of L-phenylalanine (Phe) into phenylacetaldoxime (PAOx). Cannot use tyrosine (Tyr), tryptophan (Trp) and valine (Val) as substrates. This is Phenylalanine N-monooxygenase CYP79D16 from Prunus mume (Japanese apricot).